The following is a 575-amino-acid chain: Isocitrate dehydrogenase kinase/phosphatase (575 aa).

ATP-binding positions include 315 to 321 and lysine 336; that span reads APGIRGM. Residue aspartate 371 is part of the active site.

It belongs to the AceK family.

It is found in the cytoplasm. The enzyme catalyses L-seryl-[isocitrate dehydrogenase] + ATP = O-phospho-L-seryl-[isocitrate dehydrogenase] + ADP + H(+). Its function is as follows. Bifunctional enzyme which can phosphorylate or dephosphorylate isocitrate dehydrogenase (IDH) on a specific serine residue. This is a regulatory mechanism which enables bacteria to bypass the Krebs cycle via the glyoxylate shunt in response to the source of carbon. When bacteria are grown on glucose, IDH is fully active and unphosphorylated, but when grown on acetate or ethanol, the activity of IDH declines drastically concomitant with its phosphorylation. This Citrobacter koseri (strain ATCC BAA-895 / CDC 4225-83 / SGSC4696) protein is Isocitrate dehydrogenase kinase/phosphatase.